A 276-amino-acid chain; its full sequence is Type II pantothenate kinase (276 aa).

An ATP-binding site is contributed by 8-15; the sequence is DAGGTLTK. Glutamate 76 serves as the catalytic Proton acceptor. ATP contacts are provided by residues threonine 105, 127–131, phenylalanine 143, and serine 230; that span reads GGTIM.

Belongs to the type II pantothenate kinase family. In terms of assembly, homodimer.

The protein resides in the cytoplasm. The enzyme catalyses (R)-pantothenate + ATP = (R)-4'-phosphopantothenate + ADP + H(+). It functions in the pathway cofactor biosynthesis; coenzyme A biosynthesis; CoA from (R)-pantothenate: step 1/5. Its function is as follows. Catalyzes the phosphorylation of pantothenate (Pan), the first step in CoA biosynthesis. This Bacillus cereus (strain AH820) protein is Type II pantothenate kinase.